The following is a 554-amino-acid chain: Phosphomethylpyrimidine synthase (554 aa).

Substrate contacts are provided by residues Asn188, Met217, Tyr246, His282, 302-304, 343-346, and Glu382; these read SRG and DGLR. His386 serves as a coordination point for Zn(2+). Substrate is bound at residue Tyr409. His450 contributes to the Zn(2+) binding site. 3 residues coordinate [4Fe-4S] cluster: Cys530, Cys533, and Cys538.

This sequence belongs to the ThiC family. In terms of assembly, homodimer. [4Fe-4S] cluster is required as a cofactor.

It catalyses the reaction 5-amino-1-(5-phospho-beta-D-ribosyl)imidazole + S-adenosyl-L-methionine = 4-amino-2-methyl-5-(phosphooxymethyl)pyrimidine + CO + 5'-deoxyadenosine + formate + L-methionine + 3 H(+). The protein operates within cofactor biosynthesis; thiamine diphosphate biosynthesis. In terms of biological role, catalyzes the synthesis of the hydroxymethylpyrimidine phosphate (HMP-P) moiety of thiamine from aminoimidazole ribotide (AIR) in a radical S-adenosyl-L-methionine (SAM)-dependent reaction. This chain is Phosphomethylpyrimidine synthase, found in Coxiella burnetii (strain RSA 493 / Nine Mile phase I).